The primary structure comprises 417 residues: Serine/threonine-protein phosphatase 4 regulatory subunit 2 (417 aa).

Polar residues-rich tracts occupy residues 140–149 (EKNNSNSLNR), 158–170 (NSPS…NING), and 186–196 (APMTTNGLPES). A disordered region spans residues 140 to 417 (EKNNSNSLNR…EVTDEPMEQD (278 aa)). A Phosphoserine modification is found at Ser159. Positions 197–213 (TDSKEANLQQNEEKNHS) are enriched in basic and acidic residues. The span at 214-226 (DSSTSESEVSSVS) shows a compositional bias: low complexity. A Phosphoserine modification is found at Ser226. Residues 231-258 (KHPDEDAVEAEGHEVKRLRFDKEGEVRE) are compositionally biased toward basic and acidic residues. Polar residues predominate over residues 259–269 (TASQTTSSEIS). Residues 283 to 297 (QDKDKDSRCTRQHCT) are compositionally biased toward basic and acidic residues. Residues 298–311 (EEDEEEDEEEEEES) are compositionally biased toward acidic residues. Positions 318–327 (MIPERKNQEK) are enriched in basic and acidic residues. A compositionally biased stretch (acidic residues) spans 338-350 (ETSEENNQMEESD). The segment covering 353 to 363 (QAEKDLLHSEG) has biased composition (basic and acidic residues). Residues 366 to 375 (NEGPVSSSSS) are compositionally biased toward low complexity. Over residues 385–399 (GSNSSKTGEILSESS) the composition is skewed to polar residues. The segment covering 400–417 (MENDDEATEVTDEPMEQD) has biased composition (acidic residues).

The protein belongs to the PPP4R2 family. As to quaternary structure, serine/threonine-protein phosphatase 4 (PP4) occurs in different assemblies of the catalytic and one or more regulatory subunits. Component of the PP4 complexes PPP4C-PPP4R2, PPP4C-PPP4R2-PPP4R3A and PPP4C-PPP4R2-PPP4R3B. The PPP4C-PPP4R2 complex appears to be a tetramer composed of 2 molecules of PPP4C and 2 molecules of PPP4R2. Interacts with DDX20/GEMIN3 and GEMIN4. Interacts with RPA2; this DNA damage-dependent interaction recruits PPP4C leading to RPA2 dephosphorylation. In terms of tissue distribution, widely expressed.

It is found in the cytoplasm. It localises to the cytoskeleton. Its subcellular location is the microtubule organizing center. The protein localises to the centrosome. The protein resides in the nucleus. Regulatory subunit of serine/threonine-protein phosphatase 4 (PP4). May regulate the activity of PPP4C at centrosomal microtubule organizing centers. Its interaction with the SMN complex leads to enhance the temporal localization of snRNPs, suggesting a role of PPP4C in maturation of spliceosomal snRNPs. The PPP4C-PPP4R2-PPP4R3A PP4 complex specifically dephosphorylates H2AX phosphorylated on 'Ser-140' (gamma-H2AX) generated during DNA replication and required for DNA double strand break repair. Mediates RPA2 dephosphorylation by recruiting PPP4C to RPA2 in a DNA damage-dependent manner. RPA2 dephosphorylation is required for the efficient RPA2-mediated recruitment of RAD51 to chromatin following double strand breaks, an essential step for DNA repair. The protein is Serine/threonine-protein phosphatase 4 regulatory subunit 2 (PPP4R2) of Homo sapiens (Human).